We begin with the raw amino-acid sequence, 370 residues long: Quinolinate synthase (370 aa).

Histidine 62 and serine 83 together coordinate iminosuccinate. Position 128 (cysteine 128) interacts with [4Fe-4S] cluster. Iminosuccinate is bound by residues 154 to 156 and serine 171; that span reads YAN. Cysteine 215 is a [4Fe-4S] cluster binding site. Residues 241–243 and threonine 258 each bind iminosuccinate; that span reads HPE. Cysteine 312 serves as a coordination point for [4Fe-4S] cluster.

It belongs to the quinolinate synthase family. Type 1 subfamily. The cofactor is [4Fe-4S] cluster.

It localises to the cytoplasm. The enzyme catalyses iminosuccinate + dihydroxyacetone phosphate = quinolinate + phosphate + 2 H2O + H(+). It participates in cofactor biosynthesis; NAD(+) biosynthesis; quinolinate from iminoaspartate: step 1/1. Functionally, catalyzes the condensation of iminoaspartate with dihydroxyacetone phosphate to form quinolinate. The protein is Quinolinate synthase of Neisseria meningitidis serogroup A / serotype 4A (strain DSM 15465 / Z2491).